Consider the following 197-residue polypeptide: Nucleoid occlusion factor SlmA (197 aa).

The region spanning 7–67 (INRREHILQC…GLIDFIEESL (61 aa)) is the HTH tetR-type domain. Residues 30-49 (TTAKLAAEVGVSEAALYRHF) constitute a DNA-binding region (H-T-H motif).

This sequence belongs to the nucleoid occlusion factor SlmA family. In terms of assembly, homodimer. Interacts with FtsZ.

The protein localises to the cytoplasm. The protein resides in the nucleoid. In terms of biological role, required for nucleoid occlusion (NO) phenomenon, which prevents Z-ring formation and cell division over the nucleoid. Acts as a DNA-associated cell division inhibitor that binds simultaneously chromosomal DNA and FtsZ, and disrupts the assembly of FtsZ polymers. SlmA-DNA-binding sequences (SBS) are dispersed on non-Ter regions of the chromosome, preventing FtsZ polymerization at these regions. The protein is Nucleoid occlusion factor SlmA of Shewanella loihica (strain ATCC BAA-1088 / PV-4).